The following is a 326-amino-acid chain: Isopenicillin N synthase (326 aa).

3 residues coordinate isopenicillin N: Arg84, Tyr88, and Tyr186. Residues Arg84, Tyr88, Tyr186, His209, and Asp211 each contribute to the N-[(5S)-5-amino-5-carboxypentanoyl]-L-cysteinyl-D-valine site. A Fe2OG dioxygenase domain is found at Leu183–Leu283. Fe(2+) is bound by residues His209, Asp211, and His265. Residue Arg274 participates in 2-oxoglutarate binding. Residue Ser276 coordinates isopenicillin N. Residue Ser276 coordinates N-[(5S)-5-amino-5-carboxypentanoyl]-L-cysteinyl-D-valine.

Belongs to the iron/ascorbate-dependent oxidoreductase family. The cofactor is Fe cation. Requires L-ascorbate as cofactor.

It catalyses the reaction N-[(5S)-5-amino-5-carboxypentanoyl]-L-cysteinyl-D-valine + O2 = isopenicillin N + 2 H2O. It participates in antibiotic biosynthesis; penicillin G biosynthesis; penicillin G from L-alpha-aminoadipate and L-cysteine and L-valine: step 2/3. In terms of biological role, removes, in the presence of oxygen, 4 hydrogen atoms from delta-L-(alpha-aminoadipyl)-L-cysteinyl-D-valine (ACV) to form the azetidinone and thiazolidine rings of isopenicillin. In Flavobacterium sp. (strain SC 12,154), this protein is Isopenicillin N synthase (pcbC).